The following is a 379-amino-acid chain: Tryptophan--tRNA ligase, mitochondrial (379 aa).

ATP-binding positions include Gln42 and 48 to 51; that span reads HLGN. The 'HIGH' region motif lies at 43–51; sequence PTGCFHLGN. Asp184 contributes to the L-tryptophan binding site. Residues 196 to 198, Val235, 244 to 248, and Lys247 each bind ATP; these read GDD and KMSKS. Positions 244–248 match the 'KMSKS' region motif; that stretch reads KMSKS.

Belongs to the class-I aminoacyl-tRNA synthetase family. As to quaternary structure, homodimer.

The protein localises to the mitochondrion matrix. The catalysed reaction is tRNA(Trp) + L-tryptophan + ATP = L-tryptophyl-tRNA(Trp) + AMP + diphosphate + H(+). Functionally, mitochondrial aminoacyl-tRNA synthetase that catalyzes the attachment of tryptophan to tRNA(Trp). The sequence is that of Tryptophan--tRNA ligase, mitochondrial (MSW1) from Saccharomyces cerevisiae (strain ATCC 204508 / S288c) (Baker's yeast).